The following is a 177-amino-acid chain: tRNA (cytidine(56)-2'-O)-methyltransferase (177 aa).

Residues Leu-83 and 108–112 (GAEKV) contribute to the S-adenosyl-L-methionine site.

It belongs to the aTrm56 family. In terms of assembly, homodimer.

Its subcellular location is the cytoplasm. It catalyses the reaction cytidine(56) in tRNA + S-adenosyl-L-methionine = 2'-O-methylcytidine(56) in tRNA + S-adenosyl-L-homocysteine + H(+). In terms of biological role, specifically catalyzes the AdoMet-dependent 2'-O-ribose methylation of cytidine at position 56 in tRNAs. The protein is tRNA (cytidine(56)-2'-O)-methyltransferase of Nitrosopumilus maritimus (strain SCM1).